The primary structure comprises 515 residues: UBP3-associated protein BRE5 (515 aa).

The 133-residue stretch at 8–140 (ICFAFLQNYY…FDITNDIIRF (133 aa)) folds into the NTF2 domain. Low complexity predominate over residues 157–166 (QSNEENSVSA). Disordered regions lie at residues 157 to 410 (QSNE…PVFS) and 485 to 515 (KTVK…KRKD). The segment covering 168 to 201 (EEDKIRHESGVEKEKEKEKSPEISKPKAKKETVK) has biased composition (basic and acidic residues). S187 carries the post-translational modification Phosphoserine. A compositionally biased stretch (polar residues) spans 202–213 (DTTAPTESSTQE). Composition is skewed to basic and acidic residues over residues 262 to 282 (LNEK…KEGS) and 299 to 319 (EVSD…EIKP). S282 is subject to Phosphoserine. Residues 330–341 (SGNNASTPSSSP) show a composition bias toward polar residues. The residue at position 336 (T336) is a Phosphothreonine. Phosphoserine is present on S340. Positions 374–396 (IRPETLPKKPTERKFEMGNRRDN) are enriched in basic and acidic residues. S398 is subject to Phosphoserine. The 77-residue stretch at 418–494 (YPIYIRGTNG…KTVKKPTSNN (77 aa)) folds into the RRM domain. Over residues 489-503 (KPTSNNPPGIFTNGT) the composition is skewed to polar residues. The span at 504–515 (RSHRKQPLKRKD) shows a compositional bias: basic residues.

In terms of assembly, heterotetramer with UBP3; contains two molecules of BRE5 and two molecules of UBP3. Forms a complex composed of CDC48, DOA1, deubiquitinase UBP3 and probably BRE5. Within the complex, interacts (via C-terminus) with CDC48; the interaction is direct and UBP3-independent.

Functionally, has a role in de-ubiquitination. In conjunction with UBP3, cleaves ubiquitin, leading to the subsequent mono-ubiquitination of sec23. The protein is UBP3-associated protein BRE5 (BRE5) of Saccharomyces cerevisiae (strain ATCC 204508 / S288c) (Baker's yeast).